A 254-amino-acid polypeptide reads, in one-letter code: Cyclin homolog (254 aa).

Belongs to the cyclin family. Cyclin D subfamily.

Its function is as follows. May be highly relevant to the process of cellular transformation and rapid T-cell proliferation effected by HVS during latent infections of T-cells in susceptible hosts. The sequence is that of Cyclin homolog (72) from Saimiriine herpesvirus 2 (strain 11) (SaHV-2).